We begin with the raw amino-acid sequence, 645 residues long: L-aspartate oxidase, chloroplastic (645 aa).

Residues 1-70 constitute a chloroplast transit peptide; that stretch reads MAALMNGFGS…RMRHKVGSIR (70 aa). FAD contacts are provided by residues 92 to 95, Lys114, 121 to 128, and Asp292; these read SGVA and NTNYAQGG. Residue Arg368 is the Proton donor/acceptor of the active site. FAD-binding positions include Glu453 and 469–470; that span reads SL.

Belongs to the FAD-dependent oxidoreductase 2 family. NadB subfamily. The cofactor is FAD.

It is found in the plastid. The protein resides in the chloroplast. The catalysed reaction is L-aspartate + O2 = iminosuccinate + H2O2. It functions in the pathway cofactor biosynthesis; NAD(+) biosynthesis; iminoaspartate from L-aspartate (oxidase route): step 1/1. Its function is as follows. Catalyzes the oxidation of L-aspartate to iminoaspartate. The sequence is that of L-aspartate oxidase, chloroplastic from Oryza sativa subsp. japonica (Rice).